The chain runs to 542 residues: MFS-type efflux pump MMF1 (542 aa).

Helical transmembrane passes span 24 to 44 (WTIF…MTMI), 51 to 71 (IVAA…AFLL), 98 to 118 (VIFL…VLVV), 124 to 144 (GLGG…LTTL), 151 to 171 (FGLI…LGGV), 179 to 199 (WIFW…VLFL), 215 to 235 (LDLV…IAVT), and 248 to 268 (VWVP…VEWI). Residue asparagine 285 is glycosylated (N-linked (GlcNAc...) asparagine). Helical transmembrane passes span 296–316 (FLHG…FQAI), 326–346 (IWSF…GLLI), 355–375 (LIFI…HWSV), 384–404 (ISQI…LPPI), 419–439 (AYAF…TTIF), and 490–510 (ISDS…STFL).

The protein belongs to the major facilitator superfamily.

The protein resides in the cell membrane. In terms of biological role, glycosyltransferase; part of the gene cluster that mediates the biosynthesis of mannosylerythritol lipids (MELs), surface-active substances that enhance the availability of water-insoluble substrates. MMF1 is directly involved in the secretiopn of MALs. This chain is MFS-type efflux pump MMF1, found in Pseudozyma antarctica (strain T-34) (Yeast).